A 453-amino-acid polypeptide reads, in one-letter code: Tubulin alpha-13 chain (453 aa).

Glutamine 11 lines the GTP pocket. At lysine 40 the chain carries N6-acetyllysine. Residues glutamate 71, serine 140, glycine 144, threonine 145, threonine 179, asparagine 206, and asparagine 228 each contribute to the GTP site. Glutamate 71 is a Mg(2+) binding site. Glutamate 254 is a catalytic residue. Residues glutamate 429–glutamine 453 are disordered. Positions aspartate 431 to glutamine 453 are enriched in acidic residues.

Belongs to the tubulin family. As to quaternary structure, dimer of alpha and beta chains. A typical microtubule is a hollow water-filled tube with an outer diameter of 25 nm and an inner diameter of 15 nM. Alpha-beta heterodimers associate head-to-tail to form protofilaments running lengthwise along the microtubule wall with the beta-tubulin subunit facing the microtubule plus end conferring a structural polarity. Microtubules usually have 13 protofilaments but different protofilament numbers can be found in some organisms and specialized cells. The cofactor is Mg(2+). Acetylation of alpha chains at Lys-40 stabilizes microtubules and affects affinity and processivity of microtubule motors. This modification has a role in multiple cellular functions, ranging from cell motility, cell cycle progression or cell differentiation to intracellular trafficking and signaling.

Its subcellular location is the cytoplasm. The protein localises to the cytoskeleton. The catalysed reaction is GTP + H2O = GDP + phosphate + H(+). Tubulin is the major constituent of microtubules, a cylinder consisting of laterally associated linear protofilaments composed of alpha- and beta-tubulin heterodimers. Microtubules grow by the addition of GTP-tubulin dimers to the microtubule end, where a stabilizing cap forms. Below the cap, tubulin dimers are in GDP-bound state, owing to GTPase activity of alpha-tubulin. In Naegleria pringsheimi (Amoeba), this protein is Tubulin alpha-13 chain (TUBA13).